Reading from the N-terminus, the 494-residue chain is DBIRD complex subunit ZNF326 (494 aa).

Disordered stretches follow at residues 1–22 (MDRE…QSFS), 147–170 (AFGG…RGQM), and 202–264 (KMAP…NSEK). Residues 7-22 (SYNQRSVNSYGNQSFS) show a composition bias toward polar residues. Residues 200–221 (KRKMAPPFKPVGFFGKKQKLSK) carry the Bipartite nuclear localization signal motif. 2 C2H2 AKAP95-type zinc fingers span residues 273-295 (CSFC…SATH) and 365-388 (CSAC…SADH). The interval 429 to 494 (PFETQPDEQQ…CDPLTTTDEV (66 aa)) is disordered. Residues 433 to 451 (QPDEQQQEQEEEEEEEEQQ) show a composition bias toward acidic residues.

It belongs to the AKAP95 family. In terms of assembly, component of the DBIRD complex.

It is found in the nucleus. Core component of the DBIRD complex, a multiprotein complex that acts at the interface between core mRNP particles and RNA polymerase II (RNAPII) and integrates transcript elongation with the regulation of alternative splicing. In Xenopus laevis (African clawed frog), this protein is DBIRD complex subunit ZNF326 (znf326).